Here is a 157-residue protein sequence, read N- to C-terminus: Heat shock 22 kDa protein, chloroplastic (157 aa).

Residues glycine 40–threonine 155 enclose the sHSP domain.

It belongs to the small heat shock protein (HSP20) family.

It is found in the plastid. The protein localises to the chloroplast. The sequence is that of Heat shock 22 kDa protein, chloroplastic from Chlamydomonas reinhardtii (Chlamydomonas smithii).